The primary structure comprises 69 residues: UPF0150 protein AF_1072 (69 aa).

It belongs to the UPF0150 family.

In Archaeoglobus fulgidus (strain ATCC 49558 / DSM 4304 / JCM 9628 / NBRC 100126 / VC-16), this protein is UPF0150 protein AF_1072.